We begin with the raw amino-acid sequence, 132 residues long: Small ribosomal subunit protein uS9 (132 aa).

The protein belongs to the universal ribosomal protein uS9 family.

The protein is Small ribosomal subunit protein uS9 of Methanothrix thermoacetophila (strain DSM 6194 / JCM 14653 / NBRC 101360 / PT) (Methanosaeta thermophila).